The following is a 46-amino-acid chain: EVERKHPLGGSRPGRCPTVPPGTFGHCACLCTGDASEPKGQKCCSN.

One can recognise a WAP domain in the interval 12–46 (RPGRCPTVPPGTFGHCACLCTGDASEPKGQKCCSN).

In terms of biological role, has antibiotic activity against several equine uterine pathogens; S.zooepidemicus, E.coli and P.aeruginosa. Highly efficient against S.zoopedemicus. Not active against K.pneumoniae. Selectively inactivates microbial serine proteases (subtilisin A and proteinase K) without inhibiting mammalian serine proteases (human neutrophil elastase, human cathepsin G and bovine pancreatic trypsin). The chain is Antimicrobial peptide eNAP-2 from Equus caballus (Horse).